Reading from the N-terminus, the 324-residue chain is Beta-ketoacyl-[acyl-carrier-protein] synthase III (324 aa).

Residues C112 and H249 contribute to the active site. Residues 250-254 (QANRR) form an ACP-binding region. Residue N279 is part of the active site.

The protein belongs to the thiolase-like superfamily. FabH family. Homodimer.

Its subcellular location is the cytoplasm. The enzyme catalyses malonyl-[ACP] + acetyl-CoA + H(+) = 3-oxobutanoyl-[ACP] + CO2 + CoA. Its pathway is lipid metabolism; fatty acid biosynthesis. Catalyzes the condensation reaction of fatty acid synthesis by the addition to an acyl acceptor of two carbons from malonyl-ACP. Catalyzes the first condensation reaction which initiates fatty acid synthesis and may therefore play a role in governing the total rate of fatty acid production. Possesses both acetoacetyl-ACP synthase and acetyl transacylase activities. Its substrate specificity determines the biosynthesis of branched-chain and/or straight-chain of fatty acids. The chain is Beta-ketoacyl-[acyl-carrier-protein] synthase III from Streptococcus pyogenes serotype M2 (strain MGAS10270).